A 479-amino-acid polypeptide reads, in one-letter code: Poly(A) polymerase catalytic subunit (479 aa).

Catalysis depends on residues aspartate 202 and aspartate 204. Residues aspartate 202, aspartate 204, and aspartate 253 each coordinate Ca(2+).

This sequence belongs to the poxviridae poly(A) polymerase catalytic subunit family. In terms of assembly, heterodimer of a large (catalytic) subunit and a small (regulatory) subunit.

It carries out the reaction RNA(n) + ATP = RNA(n)-3'-adenine ribonucleotide + diphosphate. Its function is as follows. Polymerase that creates the 3'-poly(A) tail of mRNA's. The sequence is that of Poly(A) polymerase catalytic subunit (OPG063) from Bos taurus (Bovine).